The sequence spans 259 residues: Global transcriptional regulator CodY (259 aa).

The GAF domain stretch occupies residues M1 to L155. The segment at residues A203–R222 is a DNA-binding region (H-T-H motif). At S215 the chain carries Phosphoserine.

This sequence belongs to the CodY family.

The protein resides in the cytoplasm. DNA-binding global transcriptional regulator which is involved in the adaptive response to starvation and acts by directly or indirectly controlling the expression of numerous genes in response to nutrient availability. During rapid exponential growth, CodY is highly active and represses genes whose products allow adaptation to nutrient depletion. This is Global transcriptional regulator CodY from Shouchella clausii (strain KSM-K16) (Alkalihalobacillus clausii).